Reading from the N-terminus, the 301-residue chain is Phosphatidylglycerol--prolipoprotein diacylglyceryl transferase (301 aa).

3 consecutive transmembrane segments (helical) span residues 17–37, 59–79, and 97–117; these read LAVR…IVVG, MLFY…VLFY, and GGMS…LFAY. Arg-142 contacts a 1,2-diacyl-sn-glycero-3-phospho-(1'-sn-glycerol). Transmembrane regions (helical) follow at residues 230-250 and 265-285; these read MGAI…TVEF and LSMG…LLVW.

This sequence belongs to the Lgt family.

The protein localises to the cell inner membrane. It carries out the reaction L-cysteinyl-[prolipoprotein] + a 1,2-diacyl-sn-glycero-3-phospho-(1'-sn-glycerol) = an S-1,2-diacyl-sn-glyceryl-L-cysteinyl-[prolipoprotein] + sn-glycerol 1-phosphate + H(+). It functions in the pathway protein modification; lipoprotein biosynthesis (diacylglyceryl transfer). Catalyzes the transfer of the diacylglyceryl group from phosphatidylglycerol to the sulfhydryl group of the N-terminal cysteine of a prolipoprotein, the first step in the formation of mature lipoproteins. The polypeptide is Phosphatidylglycerol--prolipoprotein diacylglyceryl transferase (Paraburkholderia xenovorans (strain LB400)).